Reading from the N-terminus, the 267-residue chain is MSNPRPHLLIIDALNLIRRLHAVQAQQALTPAQALIATRANLINTCRKLLAASEPTHVIAVFDGEVHSWRKEVYPAYKEGRTPMPTELREGLNELQDAFWECGVDALLSQTDEADDLIATLATGIAQHGARATIISTDKGFCQLICPQIQIRDYFNKRWLDAAFVEQQYGVAPAQLVDFWALTGIGGSNIKGVPGIGPKTATQLLQQYGDLASLLAACQQEDAAKALLKLRQHQDEALLAQRLVRLQRDIPLGFNLREIRYPPAPEA.

D115 is a binding site for Mg(2+). Residues 171-261 (VAPAQLVDFW…LGFNLREIRY (91 aa)) form the 5'-3' exonuclease domain. The K(+) site is built by L182, V193, and I196. Residues 195–200 (GIGPKT) are interaction with DNA.

It belongs to the Xni family. The cofactor is Mg(2+). K(+) serves as cofactor.

Functionally, has flap endonuclease activity. During DNA replication, flap endonucleases cleave the 5'-overhanging flap structure that is generated by displacement synthesis when DNA polymerase encounters the 5'-end of a downstream Okazaki fragment. This Aeromonas hydrophila subsp. hydrophila (strain ATCC 7966 / DSM 30187 / BCRC 13018 / CCUG 14551 / JCM 1027 / KCTC 2358 / NCIMB 9240 / NCTC 8049) protein is Flap endonuclease Xni.